A 154-amino-acid polypeptide reads, in one-letter code: Interleukin-2 (154 aa).

An N-terminal signal peptide occupies residues 1-20 (MYRMQLLSCIALSLALVTNS). Residue Thr23 is glycosylated (O-linked (GalNAc...) threonine). Residues Cys78 and Cys126 are joined by a disulfide bond.

Belongs to the IL-2 family.

It localises to the secreted. Cytokine produced by activated CD4-positive helper T-cells and to a lesser extend activated CD8-positive T-cells and natural killer (NK) cells that plays pivotal roles in the immune response and tolerance. Binds to a receptor complex composed of either the high-affinity trimeric IL-2R (IL2RA/CD25, IL2RB/CD122 and IL2RG/CD132) or the low-affinity dimeric IL-2R (IL2RB and IL2RG). Interaction with the receptor leads to oligomerization and conformation changes in the IL-2R subunits resulting in downstream signaling starting with phosphorylation of JAK1 and JAK3. In turn, JAK1 and JAK3 phosphorylate the receptor to form a docking site leading to the phosphorylation of several substrates including STAT5. This process leads to activation of several pathways including STAT, phosphoinositide-3-kinase/PI3K and mitogen-activated protein kinase/MAPK pathways. Functions as a T-cell growth factor and can increase NK-cell cytolytic activity as well. Promotes strong proliferation of activated B-cells and subsequently immunoglobulin production. Plays a pivotal role in regulating the adaptive immune system by controlling the survival and proliferation of regulatory T-cells, which are required for the maintenance of immune tolerance. Moreover, participates in the differentiation and homeostasis of effector T-cell subsets, including Th1, Th2, Th17 as well as memory CD8-positive T-cells. In Macaca mulatta (Rhesus macaque), this protein is Interleukin-2 (IL2).